The sequence spans 248 residues: Tetraspanin-17 (248 aa).

Topologically, residues Met1–Gly7 are cytoplasmic. Residues Phe8–Leu28 form a helical membrane-spanning segment. Residues Tyr29–Gln44 are Extracellular-facing. Residues Phe45–Cys65 traverse the membrane as a helical segment. The Cytoplasmic portion of the chain corresponds to Arg66–Arg69. The chain crosses the membrane as a helical span at residues Leu70–Ile90. At Lys91 to Lys210 the chain is on the extracellular side. N-linked (GlcNAc...) asparagine glycans are attached at residues Asn96, Asn109, and Asn141. Residues Tyr211–Trp231 traverse the membrane as a helical segment. Residues Ser232 to Ser248 are Cytoplasmic-facing.

It belongs to the tetraspanin (TM4SF) family.

It localises to the membrane. May be involved in the regulation of cell differentiation. The polypeptide is Tetraspanin-17 (TET17) (Arabidopsis thaliana (Mouse-ear cress)).